Here is a 122-residue protein sequence, read N- to C-terminus: uncharacterized protein (122 aa).

It belongs to the phage O protein family.

This is an uncharacterized protein from Escherichia coli O6:H1 (strain CFT073 / ATCC 700928 / UPEC).